The following is a 208-amino-acid chain: ATP-dependent dethiobiotin synthetase BioD (208 aa).

11-16 (EVGKTF) contacts ATP. Threonine 15 is a binding site for Mg(2+). Residue lysine 31 is part of the active site. Serine 35 contacts substrate. ATP-binding positions include aspartate 42, 95-98 (ETSG), and 155-156 (NQ). The Mg(2+) site is built by aspartate 42 and glutamate 95.

This sequence belongs to the dethiobiotin synthetase family. As to quaternary structure, homodimer. Requires Mg(2+) as cofactor.

Its subcellular location is the cytoplasm. It catalyses the reaction (7R,8S)-7,8-diammoniononanoate + CO2 + ATP = (4R,5S)-dethiobiotin + ADP + phosphate + 3 H(+). It participates in cofactor biosynthesis; biotin biosynthesis; biotin from 7,8-diaminononanoate: step 1/2. Catalyzes a mechanistically unusual reaction, the ATP-dependent insertion of CO2 between the N7 and N8 nitrogen atoms of 7,8-diaminopelargonic acid (DAPA, also called 7,8-diammoniononanoate) to form a ureido ring. This chain is ATP-dependent dethiobiotin synthetase BioD, found in Chlamydia felis (strain Fe/C-56) (Chlamydophila felis).